Consider the following 462-residue polypeptide: Calcitonin gene-related peptide type 1 receptor (462 aa).

The signal sequence occupies residues 1-22 (MEKKFFLSFLFLLPFFMILVIA). The Extracellular portion of the chain corresponds to 23–140 (ESEEENPDDL…NTHEKVKTAL (118 aa)). Cystine bridges form between cysteine 49–cysteine 75, cysteine 66–cysteine 106, and cysteine 89–cysteine 128. N-linked (GlcNAc...) asparagine glycans are attached at residues asparagine 67, asparagine 119, and asparagine 124. A helical membrane pass occupies residues 141–165 (NLFYLTIIGHVLSIASLLISLGIFF). Residues 166-176 (YFKSLSCQRIT) lie on the Cytoplasmic side of the membrane. A helical membrane pass occupies residues 177 to 199 (LHKNLFFSFVCNSVITIIHLTAV). The Extracellular segment spans residues 200 to 210 (ANNQALVATNP). Residues 211–239 (VSCKVSQFIHLYLMGCNYFWMLCEGIYLH) traverse the membrane as a helical segment. Over 240 to 253 (TLVVVAVFAEKQHL) the chain is Cytoplasmic. Residues 254 to 274 (MWYYFLGWGFPLIPACIHAVA) traverse the membrane as a helical segment. Residues 275 to 290 (RRLYYNDNCWISSDTQ) lie on the Extracellular side of the membrane. The segment at 289-290 (TQ) is required for RAMP3 interaction. A helical membrane pass occupies residues 291–315 (LLYIIHGPICAALLVNLFFLLNIVR). Topologically, residues 316 to 330 (VLITKLKVTHQAESN) are cytoplasmic. A helical membrane pass occupies residues 331-352 (LYMKAVRATLILVPLLGIEFVL). Over 353–367 (IPWRPEGKIAEEIYD) the chain is Extracellular. The helical transmembrane segment at 368–388 (YIINILMHYQGLLVSTIFCFF) threads the bilayer. Topologically, residues 389-462 (NGEVQAILRR…VVIKPEKLYD (74 aa)) are cytoplasmic. Phosphoserine occurs at positions 421 and 446.

The protein belongs to the G-protein coupled receptor 2 family. As to quaternary structure, heterodimer of CALCRL and RAMP1; the receptor complex functions as CGRP receptor. Heterodimer of CALCRL and RAMP2 or CALCRL and RAMP3; the complexes function as adrenomedullin receptor.

Its subcellular location is the cell membrane. In terms of biological role, g protein-coupled receptor which specificity is determined by its interaction with receptor-activity-modifying proteins (RAMPs). Together with RAMP1, form the receptor complex for calcitonin-gene-related peptides CALCA/CGRP1 and CALCB/CGRP2. Together with RAMP2 or RAMP3, function as receptor complexes for adrenomedullin (ADM and ADM2). Ligand binding causes a conformation change that triggers signaling via guanine nucleotide-binding proteins (G proteins) and modulates the activity of downstream effectors. Activates cAMP-dependent pathway. This chain is Calcitonin gene-related peptide type 1 receptor (CALCRL), found in Bos taurus (Bovine).